The chain runs to 396 residues: Subtilisin-like protease 5 (396 aa).

The signal sequence occupies residues 1–20; the sequence is MTGFFTILSFSLAALSVTNA. Residues 21–116 constitute a propeptide that is removed on maturation; it reads AQILSVPKGA…VEPDAIISQH (96 aa). An Inhibitor I9 domain is found at 37 to 113; the sequence is YIVVMKDDTS…VAFVEPDAII (77 aa). The N-linked (GlcNAc...) asparagine glycan is linked to Asn63. In terms of domain architecture, Peptidase S8 spans 125–396; it reads PWGLSRLSNR…TRLLYNGSGR (272 aa). Catalysis depends on charge relay system residues Asp156 and His187. N-linked (GlcNAc...) asparagine glycosylation is found at Asn230 and Asn248. The active-site Charge relay system is the Ser342. The segment covering 377–389 has biased composition (polar residues); it reads TIRNPGPDTTTRL. Residues 377–396 form a disordered region; sequence TIRNPGPDTTTRLLYNGSGR. The N-linked (GlcNAc...) asparagine glycan is linked to Asn392.

Belongs to the peptidase S8 family.

The protein resides in the secreted. Functionally, secreted subtilisin-like serine protease with keratinolytic activity that contributes to pathogenicity. The protein is Subtilisin-like protease 5 (SUB5) of Arthroderma benhamiae (Trichophyton mentagrophytes).